Here is a 215-residue protein sequence, read N- to C-terminus: Large ribosomal subunit protein uL16 (215 aa).

Residues 1 to 22 (MGRRPARCYRQPKGKPYPKSRY) form a disordered region.

This sequence belongs to the universal ribosomal protein uL16 family.

This chain is Large ribosomal subunit protein uL16 (RPL10), found in Tetrahymena thermophila (strain SB210).